The following is a 55-amino-acid chain: Large ribosomal subunit protein bL33 (55 aa).

Belongs to the bacterial ribosomal protein bL33 family.

The chain is Large ribosomal subunit protein bL33 from Renibacterium salmoninarum (strain ATCC 33209 / DSM 20767 / JCM 11484 / NBRC 15589 / NCIMB 2235).